Here is a 122-residue protein sequence, read N- to C-terminus: uncharacterized protein (122 aa).

To B.subtilis YpdA.

This is an uncharacterized protein from Bacillus licheniformis.